A 461-amino-acid chain; its full sequence is Argininosuccinate lyase (461 aa).

This sequence belongs to the lyase 1 family. Argininosuccinate lyase subfamily.

It localises to the cytoplasm. The catalysed reaction is 2-(N(omega)-L-arginino)succinate = fumarate + L-arginine. It participates in amino-acid biosynthesis; L-arginine biosynthesis; L-arginine from L-ornithine and carbamoyl phosphate: step 3/3. The polypeptide is Argininosuccinate lyase (Aeromonas salmonicida (strain A449)).